Here is a 337-residue protein sequence, read N- to C-terminus: Protein ABHD13 (337 aa).

The helical; Signal-anchor for type II membrane protein transmembrane segment at 37-57 (FHLYGGIVLLLLIFVSIAGIL) threads the bilayer. Active-site charge relay system residues include Ser193, Asp268, and His298. A glycan (N-linked (GlcNAc...) asparagine) is linked at Asn299.

The protein belongs to the serine esterase family.

Its subcellular location is the membrane. This chain is Protein ABHD13, found in Mus musculus (Mouse).